A 176-amino-acid chain; its full sequence is ATP-dependent protease subunit HslV (176 aa).

Residue threonine 5 is part of the active site. Positions 161, 164, and 167 each coordinate Na(+).

Belongs to the peptidase T1B family. HslV subfamily. In terms of assembly, a double ring-shaped homohexamer of HslV is capped on each side by a ring-shaped HslU homohexamer. The assembly of the HslU/HslV complex is dependent on binding of ATP.

Its subcellular location is the cytoplasm. It carries out the reaction ATP-dependent cleavage of peptide bonds with broad specificity.. Its activity is regulated as follows. Allosterically activated by HslU binding. Protease subunit of a proteasome-like degradation complex believed to be a general protein degrading machinery. The polypeptide is ATP-dependent protease subunit HslV (Caldanaerobacter subterraneus subsp. tengcongensis (strain DSM 15242 / JCM 11007 / NBRC 100824 / MB4) (Thermoanaerobacter tengcongensis)).